The chain runs to 153 residues: Ribosomal RNA large subunit methyltransferase H (153 aa).

S-adenosyl-L-methionine-binding positions include leucine 71, glycine 102, and 121–126; that span reads LSRMTL.

It belongs to the RNA methyltransferase RlmH family. In terms of assembly, homodimer.

The protein resides in the cytoplasm. It carries out the reaction pseudouridine(1915) in 23S rRNA + S-adenosyl-L-methionine = N(3)-methylpseudouridine(1915) in 23S rRNA + S-adenosyl-L-homocysteine + H(+). In terms of biological role, specifically methylates the pseudouridine at position 1915 (m3Psi1915) in 23S rRNA. This Anaeromyxobacter sp. (strain Fw109-5) protein is Ribosomal RNA large subunit methyltransferase H.